The primary structure comprises 195 residues: Chromophore lyase CpcT/CpeT 2 (195 aa).

Belongs to the CpcT/CpeT biliprotein lyase family.

Functionally, covalently attaches a chromophore to Cys residue(s) of phycobiliproteins. This chain is Chromophore lyase CpcT/CpeT 2, found in Trichodesmium erythraeum (strain IMS101).